A 133-amino-acid polypeptide reads, in one-letter code: Small ribosomal subunit protein uS9 (133 aa).

Basic and acidic residues predominate over residues 102 to 113 (KVEGYLSRDPRA). A disordered region spans residues 102 to 133 (KVEGYLSRDPRAKERRKYGLKKARKAPQFSKR). Residues 114–133 (KERRKYGLKKARKAPQFSKR) are compositionally biased toward basic residues.

This sequence belongs to the universal ribosomal protein uS9 family.

The protein is Small ribosomal subunit protein uS9 of Gloeobacter violaceus (strain ATCC 29082 / PCC 7421).